We begin with the raw amino-acid sequence, 149 residues long: Endoribonuclease YbeY (149 aa).

3 residues coordinate Zn(2+): H112, H116, and H122.

The protein belongs to the endoribonuclease YbeY family. Zn(2+) is required as a cofactor.

Its subcellular location is the cytoplasm. Its function is as follows. Single strand-specific metallo-endoribonuclease involved in late-stage 70S ribosome quality control and in maturation of the 3' terminus of the 16S rRNA. This chain is Endoribonuclease YbeY, found in Methylibium petroleiphilum (strain ATCC BAA-1232 / LMG 22953 / PM1).